A 284-amino-acid chain; its full sequence is Orotidine 5'-phosphate decarboxylase (284 aa).

Lys95 functions as the Proton donor in the catalytic mechanism.

Belongs to the OMP decarboxylase family. Type 2 subfamily.

It carries out the reaction orotidine 5'-phosphate + H(+) = UMP + CO2. Its pathway is pyrimidine metabolism; UMP biosynthesis via de novo pathway; UMP from orotate: step 2/2. The protein is Orotidine 5'-phosphate decarboxylase of Leptothrix cholodnii (strain ATCC 51168 / LMG 8142 / SP-6) (Leptothrix discophora (strain SP-6)).